A 463-amino-acid chain; its full sequence is L-seryl-tRNA(Sec) selenium transferase (463 aa).

An N6-(pyridoxal phosphate)lysine modification is found at lysine 294.

Belongs to the SelA family. Requires pyridoxal 5'-phosphate as cofactor.

It localises to the cytoplasm. It carries out the reaction L-seryl-tRNA(Sec) + selenophosphate + H(+) = L-selenocysteinyl-tRNA(Sec) + phosphate. It participates in aminoacyl-tRNA biosynthesis; selenocysteinyl-tRNA(Sec) biosynthesis; selenocysteinyl-tRNA(Sec) from L-seryl-tRNA(Sec) (bacterial route): step 1/1. Converts seryl-tRNA(Sec) to selenocysteinyl-tRNA(Sec) required for selenoprotein biosynthesis. This Hyphomonas neptunium (strain ATCC 15444) protein is L-seryl-tRNA(Sec) selenium transferase.